A 318-amino-acid chain; its full sequence is MALKTLRIGTRASQLALWQANWVKSELEKRYPGLEVSLLKIKTIGDKILDVPLAQVGGKGLFVKEIEEAMLRGDIDIAVHSMKDVPTEFPEGLGLHCITEREDPRDAVISRGIKFADLPKGAKIGTSALRRQAQLLKIRPDMEMVIIRGNVETRINKLEAENLDAVILAAAGLKRLGFTDKVAEYLPTDLSIPAIGQGALGIECRLDNEEVKSAIDFFNHPATAYAVRAERALLWRCEGGCQVPIAAFGEVEGDQLKLTGFIASVDGKTSVKGSVSGPAEECEKLGITLAEQLLKDGGHEILAEVYQREVSREKEIPV.

Cys-241 is subject to S-(dipyrrolylmethanemethyl)cysteine.

The protein belongs to the HMBS family. As to quaternary structure, monomer. Requires dipyrromethane as cofactor.

The enzyme catalyses 4 porphobilinogen + H2O = hydroxymethylbilane + 4 NH4(+). It functions in the pathway porphyrin-containing compound metabolism; protoporphyrin-IX biosynthesis; coproporphyrinogen-III from 5-aminolevulinate: step 2/4. Tetrapolymerization of the monopyrrole PBG into the hydroxymethylbilane pre-uroporphyrinogen in several discrete steps. This chain is Porphobilinogen deaminase, found in Geotalea uraniireducens (strain Rf4) (Geobacter uraniireducens).